The chain runs to 259 residues: Hydroxyacylglutathione hydrolase (259 aa).

Zn(2+) contacts are provided by histidine 56, histidine 58, aspartate 60, histidine 61, histidine 112, aspartate 133, and histidine 171. The disordered stretch occupies residues 220 to 243; sequence NPFLRTGETSVKEKADERSDAQNT. Basic and acidic residues predominate over residues 229–239; the sequence is SVKEKADERSD.

It belongs to the metallo-beta-lactamase superfamily. Glyoxalase II family. As to quaternary structure, monomer. Zn(2+) serves as cofactor.

The catalysed reaction is an S-(2-hydroxyacyl)glutathione + H2O = a 2-hydroxy carboxylate + glutathione + H(+). The protein operates within secondary metabolite metabolism; methylglyoxal degradation; (R)-lactate from methylglyoxal: step 2/2. Its function is as follows. Thiolesterase that catalyzes the hydrolysis of S-D-lactoyl-glutathione to form glutathione and D-lactic acid. The chain is Hydroxyacylglutathione hydrolase from Pseudomonas syringae pv. syringae (strain B728a).